The sequence spans 253 residues: Transmembrane protein 51 (253 aa).

Helical transmembrane passes span 17 to 37 and 65 to 85; these read IGLG…VPGF and VAYV…CLSI. Disordered stretches follow at residues 93-133 and 164-253; these read QGED…YVPS and LTGL…RPPD. Over residues 113-124 the composition is skewed to acidic residues; that stretch reads EDSQEEEEEDEE. Ser115 carries the phosphoserine modification. A compositionally biased stretch (polar residues) spans 164–176; it reads LTGLDETTPTSTR. Phosphoserine is present on residues Ser182 and Ser192. Residues 194-205 are compositionally biased toward basic residues; that stretch reads LAKRLKPLKVRR. The span at 206–217 shows a compositional bias: basic and acidic residues; the sequence is IKSEKLHLKDFR. Pro residues predominate over residues 224–238; sequence NVPPPSIEPLTPPPQ. Basic and acidic residues predominate over residues 242-253; it reads VQEKAPDTRPPD.

It is found in the membrane. The sequence is that of Transmembrane protein 51 (TMEM51) from Homo sapiens (Human).